We begin with the raw amino-acid sequence, 131 residues long: Sec-independent protein translocase protein TatB (131 aa).

Residues 1 to 21 (MFDISFAELVVVGIVALIVIG) traverse the membrane as a helical segment. Polar residues-rich tracts occupy residues 71–93 (NSFE…TQSA) and 111–131 (PVNT…QPNS). The interval 71 to 131 (NSFENSVRSE…APAEPRQPNS (61 aa)) is disordered.

Belongs to the TatB family. As to quaternary structure, the Tat system comprises two distinct complexes: a TatABC complex, containing multiple copies of TatA, TatB and TatC subunits, and a separate TatA complex, containing only TatA subunits. Substrates initially bind to the TatABC complex, which probably triggers association of the separate TatA complex to form the active translocon.

Its subcellular location is the cell inner membrane. Its function is as follows. Part of the twin-arginine translocation (Tat) system that transports large folded proteins containing a characteristic twin-arginine motif in their signal peptide across membranes. Together with TatC, TatB is part of a receptor directly interacting with Tat signal peptides. TatB may form an oligomeric binding site that transiently accommodates folded Tat precursor proteins before their translocation. The polypeptide is Sec-independent protein translocase protein TatB (Nitrosomonas europaea (strain ATCC 19718 / CIP 103999 / KCTC 2705 / NBRC 14298)).